The primary structure comprises 458 residues: Retinoic acid receptor RXR-beta (458 aa).

Residues 1–17 (GEAGRDGMGDTGRDSRS) are compositionally biased toward basic and acidic residues. Residues 1 to 105 (GEAGRDGMGD…GGSGPPEDVK (105 aa)) form a disordered region. A modulating region spans residues 1–129 (GEAGRDGMGD…PGGPGAGKRL (129 aa)). A compositionally biased stretch (low complexity) spans 18–31 (PDSSSPNPLSQGIP). Pro residues predominate over residues 32-56 (PSSPPGPPHTPSAPPPPMPPPPLGS). Residues 57 to 68 (PFPVISSSMGSP) are compositionally biased toward low complexity. Residues 69-78 (GLPPPAPPGF) are compositionally biased toward pro residues. NR C4-type zinc fingers lie at residues 130 to 150 (CAICGDRSSGKHYGVYSCEGC) and 166 to 190 (CRDNKDCTVDKRQRNRCQYCRYQKC). A DNA-binding region (nuclear receptor) is located at residues 130–195 (CAICGDRSSG…RYQKCLATGM (66 aa)). The tract at residues 196 to 220 (KREAVQEERQRGKDKDGDGDGAGGA) is hinge. Residues 201–213 (QEERQRGKDKDGD) show a composition bias toward basic and acidic residues. 2 disordered regions span residues 201–223 (QEERQRGKDKDGDGDGAGGAPEE) and 238–261 (QKSDQGVEGPGATGGGGSSPNDPV). The 234-residue stretch at 221 to 454 (PEEMPVDRIL…TFLMEMLEAP (234 aa)) folds into the NR LBD domain. A compositionally biased stretch (gly residues) spans 245 to 255 (EGPGATGGGGS).

This sequence belongs to the nuclear hormone receptor family. NR2 subfamily. Homodimer (in vitro). Heterodimer with other retinoic acid receptor family members. Binds DNA preferentially as a RAR/RXR heterodimer. Interacts with NR1H3. Interacts with AKAP13. As to expression, expressed in the adrenal gland with main expression in the zona fasciculata (at protein level).

The protein localises to the nucleus. It localises to the cytoplasm. In terms of biological role, receptor for retinoic acid. Retinoic acid receptors bind as heterodimers to their target response elements in response to their ligands, all-trans or 9-cis retinoic acid, and regulate gene expression in various biological processes. The RAR/RXR heterodimers bind to the retinoic acid response elements (RARE). The chain is Retinoic acid receptor RXR-beta (Rxrb) from Rattus norvegicus (Rat).